The primary structure comprises 277 residues: Ribosomal RNA small subunit methyltransferase A (277 aa).

Positions 26, 28, 53, 74, 101, and 123 each coordinate S-adenosyl-L-methionine.

It belongs to the class I-like SAM-binding methyltransferase superfamily. rRNA adenine N(6)-methyltransferase family. RsmA subfamily.

It localises to the cytoplasm. The catalysed reaction is adenosine(1518)/adenosine(1519) in 16S rRNA + 4 S-adenosyl-L-methionine = N(6)-dimethyladenosine(1518)/N(6)-dimethyladenosine(1519) in 16S rRNA + 4 S-adenosyl-L-homocysteine + 4 H(+). Specifically dimethylates two adjacent adenosines (A1518 and A1519) in the loop of a conserved hairpin near the 3'-end of 16S rRNA in the 30S particle. May play a critical role in biogenesis of 30S subunits. The sequence is that of Ribosomal RNA small subunit methyltransferase A from Opitutus terrae (strain DSM 11246 / JCM 15787 / PB90-1).